A 174-amino-acid polypeptide reads, in one-letter code: Adipose-secreted signaling protein (174 aa).

Ala2 is modified (N-acetylalanine). Thr147 is subject to Phosphothreonine.

Belongs to the ADISSP family.

The protein resides in the secreted. Adipocyte-secreted protein (adipokine) that acts as a key regulator for white adipose tissue (WAT) thermogenesis and glucose homeostasis at least in part through activation of protein kinase A (PKA). The polypeptide is Adipose-secreted signaling protein (Bos taurus (Bovine)).